We begin with the raw amino-acid sequence, 337 residues long: Nucleoid-associated protein PBPRA2585 (337 aa).

Belongs to the YejK family.

The protein localises to the cytoplasm. It localises to the nucleoid. This Photobacterium profundum (strain SS9) protein is Nucleoid-associated protein PBPRA2585.